The following is a 665-amino-acid chain: Probable protein transport Sec1a (665 aa).

The disordered stretch occupies residues 543–594; that stretch reads PSPSFRGIPSASTQTSPAHQPAQSMRSRRTGGTWARPRDSDDGYSSDSVLKH. 2 stretches are compositionally biased toward polar residues: residues 552-567 and 585-594; these read SASTQTSPAHQPAQSM and GYSSDSVLKH.

Belongs to the STXBP/unc-18/SEC1 family.

Involved in the vesicle trafficking. Binds syntaxins. This chain is Probable protein transport Sec1a, found in Oryza sativa subsp. japonica (Rice).